The sequence spans 503 residues: ATP synthase subunit alpha (503 aa).

An ATP-binding site is contributed by 169 to 176; that stretch reads GDRQTGKT.

Belongs to the ATPase alpha/beta chains family. In terms of assembly, F-type ATPases have 2 components, CF(1) - the catalytic core - and CF(0) - the membrane proton channel. CF(1) has five subunits: alpha(3), beta(3), gamma(1), delta(1), epsilon(1). CF(0) has three main subunits: a(1), b(2) and c(9-12). The alpha and beta chains form an alternating ring which encloses part of the gamma chain. CF(1) is attached to CF(0) by a central stalk formed by the gamma and epsilon chains, while a peripheral stalk is formed by the delta and b chains.

The protein resides in the cell membrane. It carries out the reaction ATP + H2O + 4 H(+)(in) = ADP + phosphate + 5 H(+)(out). Functionally, produces ATP from ADP in the presence of a proton gradient across the membrane. The alpha chain is a regulatory subunit. The sequence is that of ATP synthase subunit alpha from Macrococcus caseolyticus (strain JCSC5402) (Macrococcoides caseolyticum).